A 60-amino-acid chain; its full sequence is uncharacterized protein (60 aa).

Residues 19-39 traverse the membrane as a helical segment; it reads LSIMCGCSIYFLLLVFILTFY.

The protein resides in the membrane. This is an uncharacterized protein from Saccharomyces cerevisiae (strain ATCC 204508 / S288c) (Baker's yeast).